Consider the following 189-residue polypeptide: Transmembrane protein 229b (189 aa).

At 1–17 (MATTVTPEPLTALSRWY) the chain is on the cytoplasmic side. A helical transmembrane segment spans residues 18-38 (LYAIHGYFCEVMFTAAWEFVV). The Extracellular portion of the chain corresponds to 39-43 (NCNWK). Residues 44–64 (FPGVTSVWALFIYGTCILIVE) traverse the membrane as a helical segment. Residues 65–75 (RMYLCLKDRCN) are Cytoplasmic-facing. A helical membrane pass occupies residues 76 to 96 (VLLRCIIYTLWTYFWEFGTGF). Residues 97–114 (LLRQFNACPWDYSEFKYN) are Extracellular-facing. A helical membrane pass occupies residues 115-135 (FMGLITAEYAVPWFCASFIVE). The Cytoplasmic portion of the chain corresponds to 136–189 (RLVIRNTLRLRFDEVAESGQAEERLDRGGGGRGGRRGRGARAGATSANGYVKVD). The segment at 158 to 189 (ERLDRGGGGRGGRRGRGARAGATSANGYVKVD) is disordered.

This sequence belongs to the TMEM229 family.

The protein resides in the membrane. The chain is Transmembrane protein 229b (tmem229b) from Danio rerio (Zebrafish).